Consider the following 1064-residue polypeptide: Adenylate cyclase type 4 (1064 aa).

The Cytoplasmic segment spans residues 1-28 (MARLFSPRPPPSEDLFYETYYSLSQQYP). Helical transmembrane passes span 29–50 (LLIL…VAWA), 61–80 (FLTT…GLAS), 94–117 (GLIW…VSAW), 120–138 (VSFF…PLGM), 141–162 (AAAA…YLGW), and 170–190 (LLPQ…VGAY). Topologically, residues 191 to 582 (HKALMERALR…YRLSALPAFK (392 aa)) are cytoplasmic. Mg(2+) is bound by residues D278, I279, and D322. Residues 278 to 283 (DIVGFT), 320 to 322 (LGD), and R366 each bind ATP. The interval 498–523 (DSPASTSTPLPEKAFSPQWSLDRSRT) is disordered. A Phosphoserine modification is found at S517. At T533 the chain carries Phosphothreonine. A run of 3 helical transmembrane segments spans residues 583–604 (YYAA…LVTT), 608–630 (ALAT…CFSE), and 661–684 (VALG…FLPV). At 685–707 (SSDCPFLAPNVSSVAFNTSWELP) the chain is on the extracellular side. N694 and N701 each carry an N-linked (GlcNAc...) asparagine glycan. 3 helical membrane passes run 708-733 (ASLP…SLFL), 741-761 (LLLL…SHAW), and 788-804 (MGAI…LVLA). Over 805 to 1064 (RQNEYYCRLD…LTRTGSPSAS (260 aa)) the chain is Cytoplasmic. ATP contacts are provided by residues K914, 994–996 (DIW), 1001–1005 (NVASR), and K1041.

The protein belongs to the adenylyl cyclase class-4/guanylyl cyclase family. Mg(2+) serves as cofactor. Mn(2+) is required as a cofactor. As to expression, widely distributed.

It localises to the cell membrane. The protein localises to the cytoplasm. It catalyses the reaction ATP = 3',5'-cyclic AMP + diphosphate. With respect to regulation, activated by forskolin. Insensitive to calcium/calmodulin. Stimulated by GNAS and by the G-protein beta and gamma subunit complex. Functionally, catalyzes the formation of the signaling molecule cAMP in response to G-protein signaling. In Rattus norvegicus (Rat), this protein is Adenylate cyclase type 4 (Adcy4).